A 557-amino-acid polypeptide reads, in one-letter code: 2-isopropylmalate synthase (557 aa).

Residues 31 to 304 form the Pyruvate carboxyltransferase domain; it reads PTWCSVDLRD…DPGLNFASML (274 aa). Mg(2+) contacts are provided by aspartate 40, histidine 243, histidine 245, and asparagine 279. Residues 439–557 are regulatory domain; sequence IENPIKFLNF…NTMIKDSAAV (119 aa).

Belongs to the alpha-IPM synthase/homocitrate synthase family. LeuA type 2 subfamily. In terms of assembly, homodimer. Mg(2+) is required as a cofactor.

The protein resides in the cytoplasm. It catalyses the reaction 3-methyl-2-oxobutanoate + acetyl-CoA + H2O = (2S)-2-isopropylmalate + CoA + H(+). It functions in the pathway amino-acid biosynthesis; L-leucine biosynthesis; L-leucine from 3-methyl-2-oxobutanoate: step 1/4. Functionally, catalyzes the condensation of the acetyl group of acetyl-CoA with 3-methyl-2-oxobutanoate (2-ketoisovalerate) to form 3-carboxy-3-hydroxy-4-methylpentanoate (2-isopropylmalate). This chain is 2-isopropylmalate synthase, found in Desulfitobacterium hafniense (strain Y51).